A 260-amino-acid chain; its full sequence is NH(3)-dependent NAD(+) synthetase (260 aa).

31–38 (GLSGGLDS) is an ATP binding site. D37 contributes to the Mg(2+) binding site. Residue R112 participates in deamido-NAD(+) binding. T132 is a binding site for ATP. E137 contributes to the Mg(2+) binding site. ATP contacts are provided by K161 and S183.

It belongs to the NAD synthetase family. Homodimer.

It carries out the reaction deamido-NAD(+) + NH4(+) + ATP = AMP + diphosphate + NAD(+) + H(+). It participates in cofactor biosynthesis; NAD(+) biosynthesis; NAD(+) from deamido-NAD(+) (ammonia route): step 1/1. Its function is as follows. Catalyzes the ATP-dependent amidation of deamido-NAD to form NAD. Uses ammonia as a nitrogen source. This chain is NH(3)-dependent NAD(+) synthetase, found in Helicobacter pylori (strain P12).